A 455-amino-acid chain; its full sequence is Killer cell immunoglobulin-like receptor 3DL2 (455 aa).

A signal peptide spans 1-21 (MSLTVVSMACVGFFLLQGAWP). Over 22–340 (LMGGQDKPFL…SKSGICRHLH (319 aa)) the chain is Extracellular. Ig-like C2-type domains are found at residues 42 to 102 (GGHV…RPHS), 137 to 202 (GETV…VPHS), and 237 to 300 (GENV…FRAL). 2 disulfides stabilise this stretch: cysteine 49–cysteine 95 and cysteine 144–cysteine 195. 4 N-linked (GlcNAc...) asparagine glycosylation sites follow: asparagine 179, asparagine 239, asparagine 273, and asparagine 306. Cysteine 244 and cysteine 293 are joined by a disulfide. Residues 341–360 (VLIGTSVVIFLFILLLFFLL) traverse the membrane as a helical segment. Residues 361 to 455 (YRWCSNKKNA…APQSGLEGVF (95 aa)) are Cytoplasmic-facing.

The protein belongs to the immunoglobulin superfamily. Interacts with peptide-free HLA-F open conformer. As to expression, expressed in astrocytes.

It is found in the cell membrane. Functionally, receptor on natural killer (NK) cells and T cells for MHC class I molecules. Upon binding of peptide-free HLA-F open conformer, negatively regulates NK and T cell effector functions. Acts as a receptor on astrocytes for HLA-F. Through interaction with HLA-F, may protect motor neurons from astrocyte-induced toxicity. The chain is Killer cell immunoglobulin-like receptor 3DL2 from Homo sapiens (Human).